We begin with the raw amino-acid sequence, 266 residues long: 4-hydroxy-tetrahydrodipicolinate reductase (266 aa).

Residues 8–13 and glutamate 33 contribute to the NAD(+) site; that span reads GAAGRM. An NADP(+)-binding site is contributed by arginine 34. NAD(+) is bound by residues 97-99 and 121-124; these read GST and APNM. Histidine 154 (proton donor/acceptor) is an active-site residue. Residue histidine 155 coordinates (S)-2,3,4,5-tetrahydrodipicolinate. Residue lysine 158 is the Proton donor of the active site. 164 to 165 contacts (S)-2,3,4,5-tetrahydrodipicolinate; the sequence is GT.

Belongs to the DapB family.

It localises to the cytoplasm. The enzyme catalyses (S)-2,3,4,5-tetrahydrodipicolinate + NAD(+) + H2O = (2S,4S)-4-hydroxy-2,3,4,5-tetrahydrodipicolinate + NADH + H(+). The catalysed reaction is (S)-2,3,4,5-tetrahydrodipicolinate + NADP(+) + H2O = (2S,4S)-4-hydroxy-2,3,4,5-tetrahydrodipicolinate + NADPH + H(+). It functions in the pathway amino-acid biosynthesis; L-lysine biosynthesis via DAP pathway; (S)-tetrahydrodipicolinate from L-aspartate: step 4/4. Its function is as follows. Catalyzes the conversion of 4-hydroxy-tetrahydrodipicolinate (HTPA) to tetrahydrodipicolinate. The chain is 4-hydroxy-tetrahydrodipicolinate reductase from Trichlorobacter lovleyi (strain ATCC BAA-1151 / DSM 17278 / SZ) (Geobacter lovleyi).